We begin with the raw amino-acid sequence, 128 residues long: Large ribosomal subunit protein uL18 (128 aa).

Residues 1 to 36 form a disordered region; it reads MAKRSSLTRRGVSPRAAARARRHMRVRKKVRGTPER. Basic residues predominate over residues 18 to 31; sequence ARARRHMRVRKKVR.

The protein belongs to the universal ribosomal protein uL18 family. In terms of assembly, part of the 50S ribosomal subunit; part of the 5S rRNA/L5/L18/L25 subcomplex. Contacts the 5S and 23S rRNAs.

In terms of biological role, this is one of the proteins that bind and probably mediate the attachment of the 5S RNA into the large ribosomal subunit, where it forms part of the central protuberance. The sequence is that of Large ribosomal subunit protein uL18 from Thermobifida fusca (strain YX).